A 384-amino-acid chain; its full sequence is G protein-coupled receptor 88 (384 aa).

The Extracellular segment spans residues 1 to 35; that stretch reads MTNSSSTSTSTTTGGSLLLLCEEEESWAGRRIPVS. N-linked (GlcNAc...) asparagine glycosylation occurs at asparagine 3. The chain crosses the membrane as a helical span at residues 36 to 56; it reads LLYSGLAIGGTLANGMVIYLV. At 57 to 73 the chain is on the cytoplasmic side; that stretch reads SSFRKLQTTSNAFIVNG. A helical membrane pass occupies residues 74 to 94; that stretch reads CAADLSVCALWMPQEAVLGLL. Over 95–116 the chain is Extracellular; it reads PSGSAEPPGDWDGGGGSYRLLR. A helical transmembrane segment spans residues 117 to 136; that stretch reads GGLLGLGLTVSLLSHCLVAL. The Cytoplasmic segment spans residues 137–158; the sequence is NRYLLITRAPATYQVLYQRRHT. The chain crosses the membrane as a helical span at residues 159–179; sequence VGMLALSWALALGLVLLLPPW. Residues 180 to 195 are Extracellular-facing; sequence APKPGAEPPQVHYPAL. A helical transmembrane segment spans residues 196–216; sequence LAAGALLAQTALLLHCYLGIV. At 217-285 the chain is on the cytoplasmic side; the sequence is RRVRVSVKRV…RAQRRLSGLS (69 aa). The chain crosses the membrane as a helical span at residues 286 to 306; sequence VLLLCCVFLLATQPLVWVSLA. The Extracellular segment spans residues 307-310; it reads SGFS. A helical transmembrane segment spans residues 311-331; sequence LPVPWGVQAASWLLCCALSAL. Residues 332–384 lie on the Cytoplasmic side of the membrane; sequence NPLLYTWRNEEFRRSVRSVLPGVGDAAAAAAAATAVPAMSQAQLGTRAAGQHW.

The protein belongs to the G-protein coupled receptor 1 family. In terms of tissue distribution, expressed predominantly in the striatum.

Its subcellular location is the cell membrane. It is found in the cell projection. The protein localises to the cilium membrane. It localises to the cytoplasm. The protein resides in the nucleus. Functionally, orphan G protein-coupled receptor implicated in a large repertoire of behavioral responses that engage motor activities, spatial learning, and emotional processing. May play a role in the regulation of cognitive and motor function. Couples with the heterotrimeric G protein complex of the G(i) subfamily, consisting of GNAI1, GNB1 and GNG2, thereby acting through a G(i)-mediated pathway. Plays a role in the attenuation of D1 dopamine receptor (D1R)-mediated cAMP response in ciliated cells. In on-ciliated cells, involved in the inhibition of the beta-2 adrenergic receptor (B2AR) response. This is G protein-coupled receptor 88 (Gpr88) from Mus musculus (Mouse).